Reading from the N-terminus, the 538-residue chain is Mitochondrial distribution and morphology protein 34 (538 aa).

An SMP-LTD domain is found at 1 to 224 (MSFRFDRSVF…LPTALFNMSQ (224 aa)). Disordered stretches follow at residues 26 to 55 (ALNP…RKSG) and 231 to 251 (DGSR…NQPS).

It belongs to the MDM34 family. As to quaternary structure, component of the ER-mitochondria encounter structure (ERMES) or MDM complex, composed of MMM1, MDM10, MDM12 and MDM34.

It is found in the mitochondrion outer membrane. Functionally, component of the ERMES/MDM complex, which serves as a molecular tether to connect the endoplasmic reticulum (ER) and mitochondria. Components of this complex are involved in the control of mitochondrial shape and protein biogenesis, and function in nonvesicular lipid trafficking between the ER and mitochondria. MDM34 is required for the interaction of the ER-resident membrane protein MMM1 and the outer mitochondrial membrane-resident beta-barrel protein MDM10. This chain is Mitochondrial distribution and morphology protein 34, found in Candida glabrata (strain ATCC 2001 / BCRC 20586 / JCM 3761 / NBRC 0622 / NRRL Y-65 / CBS 138) (Yeast).